A 292-amino-acid chain; its full sequence is Putative sugar lactone lactonase YvrE (292 aa).

A divalent metal cation is bound by residues Glu15, Asn146, and Asp196.

It belongs to the SMP-30/CGR1 family. A divalent metal cation serves as cofactor.

The protein localises to the cytoplasm. The protein is Putative sugar lactone lactonase YvrE (yvrE) of Bacillus subtilis (strain 168).